Here is a 293-residue protein sequence, read N- to C-terminus: Acetylglutamate kinase (293 aa).

Substrate contacts are provided by residues glycine 68–glycine 69, arginine 90, and asparagine 189.

Belongs to the acetylglutamate kinase family. ArgB subfamily.

Its subcellular location is the cytoplasm. It carries out the reaction N-acetyl-L-glutamate + ATP = N-acetyl-L-glutamyl 5-phosphate + ADP. Its pathway is amino-acid biosynthesis; L-arginine biosynthesis; N(2)-acetyl-L-ornithine from L-glutamate: step 2/4. Its function is as follows. Catalyzes the ATP-dependent phosphorylation of N-acetyl-L-glutamate. In Caldicellulosiruptor saccharolyticus (strain ATCC 43494 / DSM 8903 / Tp8T 6331), this protein is Acetylglutamate kinase.